We begin with the raw amino-acid sequence, 307 residues long: D-alanine--D-alanine ligase (307 aa).

The ATP-grasp domain maps to 108-301 (KEVFAAAGLP…FPEFCAWLVE (194 aa)). 135–185 (LPPPYVVKPNAEGSSVGVYIVHEDANGPPQLAADMPQDLMVETYVPGRELT) serves as a coordination point for ATP. The Mg(2+) site is built by Asp252, Glu268, and Asn270.

It belongs to the D-alanine--D-alanine ligase family. Requires Mg(2+) as cofactor. It depends on Mn(2+) as a cofactor.

The protein localises to the cytoplasm. It catalyses the reaction 2 D-alanine + ATP = D-alanyl-D-alanine + ADP + phosphate + H(+). Its pathway is cell wall biogenesis; peptidoglycan biosynthesis. Cell wall formation. In Cereibacter sphaeroides (strain ATCC 17029 / ATH 2.4.9) (Rhodobacter sphaeroides), this protein is D-alanine--D-alanine ligase.